The chain runs to 349 residues: Protein RecA (349 aa).

64–71 serves as a coordination point for ATP; that stretch reads GPESSGKT.

Belongs to the RecA family.

The protein resides in the cytoplasm. Can catalyze the hydrolysis of ATP in the presence of single-stranded DNA, the ATP-dependent uptake of single-stranded DNA by duplex DNA, and the ATP-dependent hybridization of homologous single-stranded DNAs. It interacts with LexA causing its activation and leading to its autocatalytic cleavage. The sequence is that of Protein RecA from Rhodopseudomonas palustris (strain ATCC BAA-98 / CGA009).